The sequence spans 172 residues: Adenine phosphoribosyltransferase (172 aa).

It belongs to the purine/pyrimidine phosphoribosyltransferase family. Homodimer.

The protein localises to the cytoplasm. The enzyme catalyses AMP + diphosphate = 5-phospho-alpha-D-ribose 1-diphosphate + adenine. It participates in purine metabolism; AMP biosynthesis via salvage pathway; AMP from adenine: step 1/1. Its function is as follows. Catalyzes a salvage reaction resulting in the formation of AMP, that is energically less costly than de novo synthesis. This chain is Adenine phosphoribosyltransferase, found in Staphylococcus haemolyticus (strain JCSC1435).